We begin with the raw amino-acid sequence, 294 residues long: Aquaporin NIP2-2 (294 aa).

A run of 2 helical transmembrane segments spans residues 54 to 74 and 88 to 108; these read VISE…AASI and SVAG…ISGA. An NPA 1 motif is present at residues 111-113; that stretch reads NPA. 3 helical membrane-spanning segments follow: residues 129-151, 169-189, and 197-217; these read VPFY…KAVL, ALLI…AVAT, and LAGL…GPVS. The NPA 2 signature appears at 222–224; sequence NPA. The chain crosses the membrane as a helical span at residues 235–255; sequence VFTGLWIYFLGPVIGTLSGAW.

The protein belongs to the MIP/aquaporin (TC 1.A.8) family. NIP (TC 1.A.8.12) subfamily.

The protein resides in the membrane. Aquaporins facilitate the transport of water and small neutral solutes across cell membranes. This is Aquaporin NIP2-2 (NIP2-2) from Zea mays (Maize).